Reading from the N-terminus, the 210-residue chain is Shikimate kinase (210 aa).

Gly-34–Val-39 is a binding site for ATP. Ser-38 contributes to the Mg(2+) binding site. Positions 56, 80, and 102 each coordinate substrate. Arg-140 serves as a coordination point for ATP. Arg-159 contributes to the substrate binding site.

This sequence belongs to the shikimate kinase family. Monomer. Mg(2+) serves as cofactor.

The protein resides in the cytoplasm. It catalyses the reaction shikimate + ATP = 3-phosphoshikimate + ADP + H(+). It functions in the pathway metabolic intermediate biosynthesis; chorismate biosynthesis; chorismate from D-erythrose 4-phosphate and phosphoenolpyruvate: step 5/7. Catalyzes the specific phosphorylation of the 3-hydroxyl group of shikimic acid using ATP as a cosubstrate. The protein is Shikimate kinase of Bartonella quintana (strain Toulouse) (Rochalimaea quintana).